Reading from the N-terminus, the 156-residue chain is Small ribosomal subunit protein uS7 (156 aa).

It belongs to the universal ribosomal protein uS7 family. As to quaternary structure, part of the 30S ribosomal subunit. Contacts proteins S9 and S11.

Functionally, one of the primary rRNA binding proteins, it binds directly to 16S rRNA where it nucleates assembly of the head domain of the 30S subunit. Is located at the subunit interface close to the decoding center, probably blocks exit of the E-site tRNA. The polypeptide is Small ribosomal subunit protein uS7 (Clavibacter michiganensis subsp. michiganensis (strain NCPPB 382)).